The primary structure comprises 634 residues: tRNA uridine 5-carboxymethylaminomethyl modification enzyme MnmG (634 aa).

14-19 (GGGHAG) serves as a coordination point for FAD. 279 to 293 (GPRYCPSIEDKVVRF) provides a ligand contact to NAD(+).

The protein belongs to the MnmG family. In terms of assembly, homodimer. Heterotetramer of two MnmE and two MnmG subunits. The cofactor is FAD.

It localises to the cytoplasm. NAD-binding protein involved in the addition of a carboxymethylaminomethyl (cmnm) group at the wobble position (U34) of certain tRNAs, forming tRNA-cmnm(5)s(2)U34. The protein is tRNA uridine 5-carboxymethylaminomethyl modification enzyme MnmG of Xanthomonas campestris pv. campestris (strain B100).